The following is a 210-amino-acid chain: Endonuclease III (210 aa).

In terms of domain architecture, HhH spans 108–127; that stretch reads RIELESLPGVGRKTANIILN. [4Fe-4S] cluster contacts are provided by C187, C194, C197, and C203.

It belongs to the Nth/MutY family. [4Fe-4S] cluster is required as a cofactor.

The catalysed reaction is 2'-deoxyribonucleotide-(2'-deoxyribose 5'-phosphate)-2'-deoxyribonucleotide-DNA = a 3'-end 2'-deoxyribonucleotide-(2,3-dehydro-2,3-deoxyribose 5'-phosphate)-DNA + a 5'-end 5'-phospho-2'-deoxyribonucleoside-DNA + H(+). Functionally, DNA repair enzyme that has both DNA N-glycosylase activity and AP-lyase activity. The DNA N-glycosylase activity releases various damaged pyrimidines from DNA by cleaving the N-glycosidic bond, leaving an AP (apurinic/apyrimidinic) site. The AP-lyase activity cleaves the phosphodiester bond 3' to the AP site by a beta-elimination, leaving a 3'-terminal unsaturated sugar and a product with a terminal 5'-phosphate. In Buchnera aphidicola subsp. Acyrthosiphon pisum (strain APS) (Acyrthosiphon pisum symbiotic bacterium), this protein is Endonuclease III.